Here is a 149-residue protein sequence, read N- to C-terminus: Large ribosomal subunit protein bL9 (149 aa).

This sequence belongs to the bacterial ribosomal protein bL9 family.

Functionally, binds to the 23S rRNA. The sequence is that of Large ribosomal subunit protein bL9 from Legionella pneumophila subsp. pneumophila (strain Philadelphia 1 / ATCC 33152 / DSM 7513).